The following is a 600-amino-acid chain: MGVKYLWDVLEPCKKTFPLDHLQNKRVCVDLSCWMVELHKVNKSYCATKEKVYLRGFFHRLRALIALNCSIILVSDGAIPGIKVPTYKRRLKARFEIADDGVEPSKETSLKRNMGSEFSCIIKEAKVIASTLGILCLDGIEEAEAQCALLNSESLCDACFSFDSDIFLFGAKTVYREICLGEGGYVVCYEMDDIKKKLGLGRNSLIALALLLGSDYSQGVRGLRQEKACELVRSIGDNVILEKVASEGLSFAEKPRKSKKQVRPSVCSKKGTLPLVVINGNNRDPERLEEIKQVIDAFMNPKCHQADSNTVSRALAEFSFQRTKLQEICHQFFEWPPEKTDEYILPKVAERNLRRFANLQSRSTEVEVNLPLHKPQMPEKCPVSEIIKTRKVQGRECFEVSWNDLEGLESSIVPADLVERACPEKIIEFKEKMAAKKKKPKPKQKQKETSSPTKSSSLVELSLELQHLDLNSTSLVSRSTLEEAEQENEQQNSKKHDYLRLIDSPDRENCNNAWSNRDRLGVGMSSFPLYPETEVIDLISPCPEARSRSVSRSYQEQKSHDHQLETVIELSDSETDDEEHCKKARELRIFLQNIRKDIIL.

Residues 1-97 (MGVKYLWDVL…KRRLKARFEI (97 aa)) form an N-domain region. An XPG-N domain region spans residues 2-97 (GVKYLWDVLE…KRRLKARFEI (96 aa)). Residues D30, D76, E142, E144, D163, D165, and D215 each coordinate Mg(2+). The segment at 130-215 (STLGILCLDG…IALALLLGSD (86 aa)) is XPG-I domain. I-domain stretches follow at residues 130–218 (STLG…DYSQ) and 130–219 (STLG…YSQG). The tract at residues 215 to 353 (DYSQGVRGLR…ILPKVAERNL (139 aa)) is 5'-3' exonuclease domain. The disordered stretch occupies residues 433–458 (MAAKKKKPKPKQKQKETSSPTKSSSL). Basic residues predominate over residues 435–444 (AKKKKPKPKQ).

It belongs to the XPG/RAD2 endonuclease family. GEN subfamily. The cofactor is Mg(2+).

The protein localises to the nucleus. Its function is as follows. Endonuclease which cleaves flap structures at the junction between single-stranded DNA and double-stranded DNA with a specific cleavage site in the 5' overhang strand exactly one nucleotide 3' of the branch point. Structure- and sequence-specific nuclease that resolves holliday junctions (HJs) by symmetrically oriented incisions in two opposing strands near the junction point, thus leading to ligatable products; HJs are physical links between homologous DNA molecules that arise as central intermediary structures during homologous recombination and repair in meiotic and somatic cells. Structure-specific nuclease with 5'-flap endonuclease activity, preferentially cleaving static flaps 5' overhang strand exactly one nucleotide in the 3' direction of the branch point and, to lower extent, on the two neighboring positions. Also able to cleave double-stranded flap strand 1 one nucleotide in the 3' direction of the branch point. Together with MUS81, essential for the resolution of toxic replication structures to ensure genome stability, and to maintain telomere integrity and replication. This Arabidopsis thaliana (Mouse-ear cress) protein is Single-strand DNA endonuclease 1.